Reading from the N-terminus, the 336-residue chain is Inactive serine/threonine-protein kinase PLK5 (336 aa).

One can recognise a Protein kinase; truncated domain in the interval 1-65 (MYTVLTGTPP…LDHLLQDDFF (65 aa)). Disordered regions lie at residues 109-135 (PCPFTPKEASGPGEGGPDPDSMEWDGE) and 224-245 (GRTGRHPHGPATPRREGTLPTP). One can recognise a POLO box domain in the interval 255 to 336 (LLRFLASEHA…HHALRMLQSI (82 aa)).

The protein belongs to the protein kinase superfamily. Ser/Thr protein kinase family. CDC5/Polo subfamily. In terms of tissue distribution, expressed in the brain, neurons and glial cells. Also expressed in highly differentiated cells, such as the serous acini in the parotid gland, distal and proximal tubules of the kidney, tubules of the seminal gland, Kupffer cells and some hepatocytes in the liver, and some cells in the germinal center of lymph nodes (at protein level).

The protein localises to the nucleus. Its subcellular location is the nucleolus. The protein resides in the cytoplasm. Inactive serine/threonine-protein kinase that plays a role in cell cycle progression and neuronal differentiation. The sequence is that of Inactive serine/threonine-protein kinase PLK5 (PLK5) from Homo sapiens (Human).